A 470-amino-acid chain; its full sequence is UDP-N-acetylmuramoylalanine--D-glutamate ligase (470 aa).

ATP is bound at residue 121–127 (GTNGKST).

The protein belongs to the MurCDEF family.

The protein resides in the cytoplasm. It carries out the reaction UDP-N-acetyl-alpha-D-muramoyl-L-alanine + D-glutamate + ATP = UDP-N-acetyl-alpha-D-muramoyl-L-alanyl-D-glutamate + ADP + phosphate + H(+). The protein operates within cell wall biogenesis; peptidoglycan biosynthesis. Functionally, cell wall formation. Catalyzes the addition of glutamate to the nucleotide precursor UDP-N-acetylmuramoyl-L-alanine (UMA). The chain is UDP-N-acetylmuramoylalanine--D-glutamate ligase from Rhizobium etli (strain ATCC 51251 / DSM 11541 / JCM 21823 / NBRC 15573 / CFN 42).